Consider the following 31-residue polypeptide: Protamine CIII (31 aa).

Residues 1–31 (MPRRRRASRPVRRRRRPRVSRRRRRGGRRRR) form a disordered region.

Testis.

It is found in the nucleus. It localises to the chromosome. Its function is as follows. Protamines substitute for histones in the chromatin of sperm during the haploid phase of spermatogenesis. They compact sperm DNA into a highly condensed, stable and inactive complex. The chain is Protamine CIII from Oncorhynchus mykiss (Rainbow trout).